The sequence spans 458 residues: Protein adenylyltransferase FICD (458 aa).

Residues 1–23 lie on the Cytoplasmic side of the membrane; it reads MMLIPMASVMAVTEPKWVSVWSR. Residues 24–44 form a helical; Signal-anchor for type II membrane protein membrane-spanning segment; it reads FLWVTLLSMVLGSLLALLLPL. Residues 45 to 458 are Lumenal-facing; that stretch reads GAVEEQCLAV…GFKETLPVKP (414 aa). Ser79 is modified (O-AMP-serine; by autocatalysis). Thr80 carries the O-AMP-threonine; by autocatalysis modification. TPR repeat units lie at residues 106-139 and 140-173; these read ARAA…DPDF and VDAL…SPYH. Residue Thr183 is modified to O-AMP-threonine; by autocatalysis. An Inhibitory (S/T)XXXE(G/N) motif motif is present at residues 230-235; sequence TVAIEG. Glu234 provides a ligand contact to ATP. A glycan (N-linked (GlcNAc...) asparagine) is linked at Asn275. The region spanning 285–420 is the Fido domain; sequence VTISDVLEIH…VRPFIRFIAK (136 aa). Position 316–319 (316–319) interacts with ATP; sequence VGHH. His363 is an active-site residue. Residues 367–374, 399–400, and Asn407 contribute to the ATP site; these read DGNGRTSR and YY. Asn446 carries N-linked (GlcNAc...) asparagine glycosylation.

It belongs to the fic family. Homodimer. Interacts with HD. Mg(2+) serves as cofactor. It depends on Mn(2+) as a cofactor. In terms of processing, auto-AMPylated in vitro; it is unclear whether auto-AMPylation is relevant in vivo. N-glycosylated; predominantly glycosylated at Asn-275. Ubiquitous.

Its subcellular location is the endoplasmic reticulum membrane. The catalysed reaction is L-tyrosyl-[protein] + ATP = O-(5'-adenylyl)-L-tyrosyl-[protein] + diphosphate. It carries out the reaction 3-O-(5'-adenylyl)-L-threonyl-[protein] + H2O = L-threonyl-[protein] + AMP + H(+). It catalyses the reaction L-threonyl-[protein] + ATP = 3-O-(5'-adenylyl)-L-threonyl-[protein] + diphosphate. The side chain of Glu-234 determines which of the two opposing activities (AMPylase or de-AMPylase) will take place. In response to endoplasmic reticulum stress, mediates de-AMPylase activity. Adenylyltransferase activity is inhibited by the inhibitory helix present at the N-terminus: Glu-234 binds ATP and competes with ATP-binding at Arg-374, thereby preventing adenylyltransferase activity. In unstressed cells, disengagement of Glu-234 promotes adenylyltransferase activity. Activation dissociates ATP-binding from Glu-234, allowing ordered binding of the entire ATP moiety with the alpha-phosphate in an orientation that is productive for accepting an incoming target hydroxyl side chain. Protein that can both mediate the addition of adenosine 5'-monophosphate (AMP) to specific residues of target proteins (AMPylation), and the removal of the same modification from target proteins (de-AMPylation), depending on the context. The side chain of Glu-231 determines which of the two opposing activities (AMPylase or de-AMPylase) will take place. Acts as a key regulator of the ERN1/IRE1-mediated unfolded protein response (UPR) by mediating AMPylation or de-AMPylation of HSPA5/BiP. In unstressed cells, acts as an adenylyltransferase by mediating AMPylation of HSPA5/BiP at 'Thr-518', thereby inactivating it. In response to endoplasmic reticulum stress, acts as a phosphodiesterase by mediating removal of ATP (de-AMPylation) from HSPA5/BiP at 'Thr-518', leading to restore HSPA5/BiP activity. Although it is able to AMPylate RhoA, Rac and Cdc42 Rho GTPases in vitro, Rho GTPases do not constitute physiological substrates. The sequence is that of Protein adenylyltransferase FICD from Homo sapiens (Human).